The sequence spans 247 residues: Terpene cyclase adrI (247 aa).

5 consecutive transmembrane segments (helical) span residues 20–40 (VAEFLRILAGICWTLNYFSML), 51–71 (TGIFPLCNDIGWEFIYAFIYP), 76–96 (HWEGGVRVWFLVHCIVIFFII), 112–132 (NLYFLYGIVTIGFAIGQYSFA), and 141–161 (FFYGGVLCQTLASLGPIAQIL). Residue Asn-164 is glycosylated (N-linked (GlcNAc...) asparagine). A run of 2 helical transmembrane segments spans residues 179 to 199 (FGGFIKLTIYYLTGNAAGPWF) and 205 to 225 (KFYIGLTLILDFTYPICYYVI).

This sequence belongs to the paxB family.

The protein resides in the membrane. Its pathway is secondary metabolite biosynthesis; terpenoid biosynthesis. Its function is as follows. Terpene cyclase; part of the gene cluster that mediates the biosynthesis of andrastins, meroterpenoid compounds that exhibit inhibitory activity against ras farnesyltransferase, suggesting that they could be promising leads for antitumor agents. The first step of the pathway is the synthesis of 3,5-dimethylorsellinic acid (DMOA) by the polyketide synthase adrD via condensation of one acetyl-CoA starter unit with 3 malonyl-CoA units and 2 methylations. DMAO is then converted to farnesyl-DMAO by the prenyltransferase adrG. The methyltransferase adrK catalyzes the methylation of the carboxyl group of farnesyl-DMAO to farnesyl-DMAO methyl ester which is further converted to epoxyfarnesyl-DMAO methyl ester by the FAD-dependent monooxygenase adrH. The terpene cyclase adrI then catalyzes the carbon skeletal rearrangement to generate the andrastin E, the first compound in the pathway having the andrastin scaffold, with the tetracyclic ring system. The post-cyclization tailoring enzymes adrF, adrE, adrJ, and adrA, are involved in the conversion of andrastin E into andrastin A. The short chain dehydrogenase adrF is responsible for the oxidation of the C-3 a hydroxyl group of andrastin E to yield the corresponding ketone, andrastin D. The ketoreductase adrE stereoselectively reduces the carbonyl moiety to reverse the stereochemistry of the C-3 position to yield andrastin F. The acetyltransferase adrJ is the acetyltransferase that attaches the acetyl group to the C-3 hydroxyl group of andrastin F to yield andrastin C. Finally, the cytochrome P450 monooxygenase adrA catalyzes two sequential oxidation reactions of the C-23 methyl group, to generate the corresponding alcohol andrastin B, and aldehyde andrastin A. This Penicillium rubens (strain ATCC 28089 / DSM 1075 / NRRL 1951 / Wisconsin 54-1255) (Penicillium chrysogenum) protein is Terpene cyclase adrI.